Here is a 137-residue protein sequence, read N- to C-terminus: Putative pre-16S rRNA nuclease (137 aa).

It belongs to the YqgF nuclease family.

Its subcellular location is the cytoplasm. In terms of biological role, could be a nuclease involved in processing of the 5'-end of pre-16S rRNA. In Anaeromyxobacter sp. (strain Fw109-5), this protein is Putative pre-16S rRNA nuclease.